Reading from the N-terminus, the 198-residue chain is Armadillo repeat-containing protein 7 (198 aa).

ARM repeat units follow at residues 57–99 (QVLD…QAGG) and 100–140 (LPLI…TSLP). Position 169 is a phosphoserine (S169).

Component of the minor spliceosome. Within this complex, interacts with RBM48.

Functionally, as a component of the minor spliceosome, involved in the splicing of U12-type introns in pre-mRNAs. This chain is Armadillo repeat-containing protein 7 (Armc7), found in Mus musculus (Mouse).